Here is a 1035-residue protein sequence, read N- to C-terminus: Beta-galactosidase (1035 aa).

Residues Asn-109 and Asp-208 each coordinate substrate. Asp-208 contacts Na(+). Mg(2+) is bound by residues Glu-424, His-426, and Glu-469. Substrate contacts are provided by residues Glu-469 and 545–548 (EYAH). Catalysis depends on Glu-469, which acts as the Proton donor. Glu-545 acts as the Nucleophile in catalysis. Asn-605 provides a ligand contact to Mg(2+). The Na(+) site is built by Phe-609 and Asn-612. Substrate is bound by residues Asn-612 and Trp-1011.

The protein belongs to the glycosyl hydrolase 2 family. Homotetramer. Mg(2+) is required as a cofactor. Na(+) serves as cofactor.

The enzyme catalyses Hydrolysis of terminal non-reducing beta-D-galactose residues in beta-D-galactosides.. In Klebsiella pneumoniae (strain 342), this protein is Beta-galactosidase.